The primary structure comprises 917 residues: Translation initiation factor IF-2 (917 aa).

A disordered region spans residues 1 to 312 (MEEQKSIKET…KGGREENENT (312 aa)). The span at 20-30 (TKKKLVIKKKA) shows a compositional bias: basic residues. A compositionally biased stretch (polar residues) spans 41-59 (PGAQGQTTATEAKQSSPAS). 2 stretches are compositionally biased toward basic and acidic residues: residues 60–76 (SDKK…EAKR) and 95–118 (RPDR…RKPE). Composition is skewed to gly residues over residues 132 to 141 (SGGGQGGGNQ), 167 to 256 (QTGG…GYQG), and 281 to 293 (APGG…GPGG). Residues 297-312 (RVFDKEKGGREENENT) show a composition bias toward basic and acidic residues. Residues 414–587 (TRPPVVTIMG…ELLDHKANPK (174 aa)) form the tr-type G domain. The G1 stretch occupies residues 423-430 (GHVDHGKT). 423 to 430 (GHVDHGKT) lines the GTP pocket. The interval 448 to 452 (GITQH) is G2. The interval 469–472 (DTPG) is G3. Residues 469–473 (DTPGH) and 523–526 (NKID) each bind GTP. A G4 region spans residues 523-526 (NKID). The segment at 559–561 (SAK) is G5.

The protein belongs to the TRAFAC class translation factor GTPase superfamily. Classic translation factor GTPase family. IF-2 subfamily.

It is found in the cytoplasm. Functionally, one of the essential components for the initiation of protein synthesis. Protects formylmethionyl-tRNA from spontaneous hydrolysis and promotes its binding to the 30S ribosomal subunits. Also involved in the hydrolysis of GTP during the formation of the 70S ribosomal complex. The sequence is that of Translation initiation factor IF-2 from Leptospira biflexa serovar Patoc (strain Patoc 1 / ATCC 23582 / Paris).